The primary structure comprises 206 residues: Small ribosomal subunit protein uS4 (206 aa).

The segment at 18 to 44 (NIWGRPKSPVNRREYGPGQHGQRRKGK) is disordered. An S4 RNA-binding domain is found at 94-157 (RRLDAVVYRA…KQLAVVLEAV (64 aa)).

Belongs to the universal ribosomal protein uS4 family. As to quaternary structure, part of the 30S ribosomal subunit. Contacts protein S5. The interaction surface between S4 and S5 is involved in control of translational fidelity.

Functionally, one of the primary rRNA binding proteins, it binds directly to 16S rRNA where it nucleates assembly of the body of the 30S subunit. Its function is as follows. With S5 and S12 plays an important role in translational accuracy. This chain is Small ribosomal subunit protein uS4, found in Jannaschia sp. (strain CCS1).